The following is a 1182-amino-acid chain: Rho guanine nucleotide exchange factor osg-1 (1182 aa).

A compositionally biased stretch (acidic residues) spans 1–12 (MLNPNDADDSDS). The segment at 1 to 96 (MLNPNDADDS…TNSEPNVDMP (96 aa)) is disordered. Polar residues predominate over residues 29–41 (ATVSPSTRNSFYN). Over residues 69-78 (ASRERSESRR) the composition is skewed to basic and acidic residues. The 188-residue stretch at 357-544 (VRHLAARELL…HCLAVAINQH (188 aa)) folds into the DH domain. Positions 637–669 (EDVQISKDTLSQLEEVERKLESSREDDRVLKKM) form a coiled coil. The interval 863 to 884 (INSSGSDTESSSDEGTSTAGQT) is disordered. Residues 865–879 (SSGSDTESSSDEGTS) are compositionally biased toward low complexity. Residues 897 to 922 (VVNSTERVRSRARDRLARLRNSITSI) are a coiled coil.

In terms of tissue distribution, expressed in muscles in the body wall and head, and in the nervous system in neurons including FLP and ASE neurons in the head.

Its function is as follows. Probable guanine nucleotide exchange factor which regulates the Rho GTPase rho-1. Functions in ASE sensory neurons where it promotes neuronal degeneration under conditions of oxidative stress. In Caenorhabditis elegans, this protein is Rho guanine nucleotide exchange factor osg-1.